The chain runs to 1453 residues: Chromatin remodeling regulator CECR2 (1453 aa).

A disordered region spans residues 170 to 237 (VQGRSNGELS…DLQTRNGSRG (68 aa)). A compositionally biased stretch (basic residues) spans 197–209 (TGKRRGRPPKRKK). The span at 210 to 222 (LQEEIISSEKQEE) shows a compositional bias: basic and acidic residues. The segment covering 223–234 (NSLTSDLQTRNG) has biased composition (polar residues). A Phosphoserine modification is found at serine 402. One can recognise a Bromo domain in the interval 414–518 (FELDDDFTAM…RCFHRAMTKH (105 aa)). Threonine 526 carries the phosphothreonine modification. Disordered stretches follow at residues 536-667 (EKRE…HPPF), 767-796 (HGTTNPGRLGPDEKPHLGPGPSHHPHTLGH), 827-868 (GYMQ…GESM), 884-1020 (VCPP…DNSY), 1046-1072 (VVGEASPCRSEGKGLDGSGSEKPLCPR), 1131-1308 (LASM…YLYG), 1331-1368 (MLQTGSPYTPQRSASHFQPRAYPSPVPAHPPPHPVATQ), and 1396-1453 (QTGT…LDQS). Phosphoserine is present on serine 551. Residues 637–649 (GSLQGSDPTNLHG) show a composition bias toward polar residues. The segment covering 655 to 664 (EAPPGEPLQH) has biased composition (pro residues). The segment covering 887–905 (PGVPYHPRQPTPPQLPGPF) has biased composition (pro residues). Residue serine 983 is modified to Phosphoserine. Residues 985–998 (QERETEDSQLKSDA) are compositionally biased toward basic and acidic residues. The segment covering 999 to 1020 (SDSADTYKTSKNKNTWPLDNSY) has biased composition (polar residues). An asymmetric dimethylarginine mark is found at arginine 1166 and arginine 1172. Composition is skewed to low complexity over residues 1173–1187 (YSYQPPSQPSYHPYQ) and 1202–1211 (QRSLPSQRSP). The segment covering 1228-1250 (NVLSSLQGCETLNTALTSPTQMD) has biased composition (polar residues). Residues 1265 to 1289 (GPEEEKMDESVERPESPKEFLDLDN) are compositionally biased toward basic and acidic residues. Phosphoserine is present on serine 1280. Polar residues-rich tracts occupy residues 1291 to 1304 (NAATKRQNSLSTSD) and 1331 to 1346 (MLQTGSPYTPQRSASH). Residues 1352 to 1364 (YPSPVPAHPPPHP) are compositionally biased toward pro residues.

As to quaternary structure, component of the CERF-1 ISWI chromatin remodeling complex (also called the CECR2-containing remodeling factor (CERF) complex) at least composed of CECR2 and SMARCA1. Component of the CERF-5 ISWI chromatin remodeling complex at least composed of CECR2 and SMARCA5/SNF2H. LUZP1 is detected as part of the CERF-1 and CERF-5 complexes in embryonic stem (ES) cells where it is involved in complex stabilization but is not detected in the complexes in the testis. Interacts with CCAR2; CCAR2 may form part of the CERF-1 and/or CEF-5 ISWI chromatin remodeling complexes in ES cells. Interacts with acetylated lysine residues on histone H2A and H3 (in vitro). Interacts with LRPPRC.

The protein resides in the nucleus. Its function is as follows. Regulatory subunit of the ATP-dependent CERF-1 and CERF-5 ISWI chromatin remodeling complexes, which form ordered nucleosome arrays on chromatin and facilitate access to DNA during DNA-templated processes such as DNA replication, transcription, and repair. The complexes do not have the ability to slide mononucleosomes to the center of a DNA template. The CERF-1 ISWI chromatin remodeling complex has a lower ATP hydrolysis rate than the CERF-5 ISWI chromatin remodeling complex. Plays a role in various processes during development: required during embryogenesis for neural tube closure and inner ear development. In adults, required for spermatogenesis, via the formation of ISWI-type chromatin complexes. In histone-modifying complexes, CECR2 recognizes and binds acylated histones: binds histones that are acetylated and/or butyrylated. May also be involved through its interaction with LRPPRC in the integration of cytoskeletal network with vesicular trafficking, nucleocytosolic shuttling, transcription, chromosome remodeling and cytokinesis. This Mus musculus (Mouse) protein is Chromatin remodeling regulator CECR2.